A 1033-amino-acid chain; its full sequence is Tyrosine-protein kinase-like otk (1033 aa).

The signal sequence occupies residues 1 to 22 (MTARMISIYGLVLASMMASVWA). Residues 23–581 (SSSRFQRLPQ…GGDGFLVTRA (559 aa)) are Extracellular-facing. Ig-like C2-type domains are found at residues 25 to 108 (SRFQ…REAS), 109 to 199 (PPAK…RVMS), 251 to 365 (PEDL…LPIS), 368 to 463 (PGVL…VAIN), and 468 to 558 (PKFS…VQLV). N-linked (GlcNAc...) asparagine glycosylation occurs at asparagine 39. 4 cysteine pairs are disulfide-bonded: cysteine 46–cysteine 95, cysteine 137–cysteine 188, cysteine 276–cysteine 354, and cysteine 399–cysteine 447. Residues asparagine 336, asparagine 417, asparagine 429, asparagine 444, asparagine 457, asparagine 512, and asparagine 524 are each glycosylated (N-linked (GlcNAc...) asparagine). The cysteines at positions 490 and 542 are disulfide-linked. Residues 582–602 (VLITMTVALAYIVLVVGLMLW) form a helical membrane-spanning segment. Residues 603–1033 (CRYRRQARKA…LSKAMQSVEK (431 aa)) lie on the Cytoplasmic side of the membrane. 2 disordered regions span residues 617–679 (LSTK…KKSA) and 718–760 (SPTD…KTSM). Polar residues predominate over residues 655 to 673 (KSSGDAQKSDDTACSQQSR). The residue at position 678 (serine 678) is a Phosphoserine. A Protein kinase; inactive domain is found at 692-1028 (LSELIQIGRG…QLGAALSKAM (337 aa)). Over residues 720 to 731 (TDKDADTEKQHS) the composition is skewed to basic and acidic residues.

This sequence belongs to the protein kinase superfamily. Tyr protein kinase family. Insulin receptor subfamily. As to quaternary structure, interacts with plexA; component of a receptor complex that mediates the repulsive signaling in response to Semaphorin ligands.

It is found in the cell membrane. Functionally, acts as a calcium-dependent, homophilic cell adhesion molecule that regulates neural recognition during the development of the nervous system. Component of the repulsive Plexin signaling response to regulate motor axon guidance at the embryonic stage. Also component of a receptor complex that is required in the adult visual system to innervate the lamina layer; specific targeting of R1-R6 axons. The polypeptide is Tyrosine-protein kinase-like otk (Drosophila erecta (Fruit fly)).